The sequence spans 129 residues: M-zodatoxin-Lt8e (129 aa).

Residues 1–20 (MKYFVVALALVAAFVCIAES) form the signal peptide. A propeptide spanning residues 21-60 (KPAESEHELAEVEEENELADLEDAVWLEHLADLSDLEEAR) is cleaved from the precursor. The Processing quadruplet motif signature appears at 57–60 (EEAR).

Post-translationally, cleavage of the propeptide depends on the processing quadruplet motif (XXXR, with at least one of X being E). As to expression, expressed by the venom gland.

The protein localises to the secreted. Functionally, insecticidal, cytolytic and antimicrobial peptide. Forms voltage-dependent, ion-permeable channels in membranes. At high concentration causes cell membrane lysis. In Lachesana tarabaevi (Spider), this protein is M-zodatoxin-Lt8e (cit 1-5).